The chain runs to 525 residues: Bifunctional purine biosynthesis protein PurH (525 aa).

The MGS-like domain occupies 1–145 (MSNVERALIS…KNNASVGIVT (145 aa)).

Belongs to the PurH family.

It catalyses the reaction (6R)-10-formyltetrahydrofolate + 5-amino-1-(5-phospho-beta-D-ribosyl)imidazole-4-carboxamide = 5-formamido-1-(5-phospho-D-ribosyl)imidazole-4-carboxamide + (6S)-5,6,7,8-tetrahydrofolate. The enzyme catalyses IMP + H2O = 5-formamido-1-(5-phospho-D-ribosyl)imidazole-4-carboxamide. Its pathway is purine metabolism; IMP biosynthesis via de novo pathway; 5-formamido-1-(5-phospho-D-ribosyl)imidazole-4-carboxamide from 5-amino-1-(5-phospho-D-ribosyl)imidazole-4-carboxamide (10-formyl THF route): step 1/1. The protein operates within purine metabolism; IMP biosynthesis via de novo pathway; IMP from 5-formamido-1-(5-phospho-D-ribosyl)imidazole-4-carboxamide: step 1/1. In Alcanivorax borkumensis (strain ATCC 700651 / DSM 11573 / NCIMB 13689 / SK2), this protein is Bifunctional purine biosynthesis protein PurH.